A 434-amino-acid polypeptide reads, in one-letter code: Fez family zinc finger protein 2 (434 aa).

The short motif at 27-42 (SLAFSIERIMAKTSEP) is the Engrailed homology 1 repressor element. 6 consecutive C2H2-type zinc fingers follow at residues 253-275 (FTCE…MPVH), 281-303 (FVCK…KIIH), 309-331 (HKCN…IRIH), 337-359 (FVCE…KLTH), 365-387 (YKCS…MHTH), and 393-416 (FTCA…RKLH).

Belongs to the krueppel C2H2-type zinc-finger protein family.

The protein localises to the nucleus. Functionally, transcription repressor. Component of the regulatory cascade that controls the development of dopaminergic (DA) and serotonergic (5HT) neurons. This chain is Fez family zinc finger protein 2 (fezf2), found in Xenopus laevis (African clawed frog).